A 1088-amino-acid chain; its full sequence is RNA-directed RNA polymerase (1088 aa).

Residues 501–687 (LSYGDVTRFL…AKRYIAGGKI (187 aa)) enclose the RdRp catalytic domain.

Belongs to the reoviridae RNA-directed RNA polymerase family. Interacts with VP3 (Potential). Interacts with VP2; this interaction activates VP1. Interacts with NSP5; this interaction is probably necessary for the formation of functional virus factories. Interacts with NSP2; this interaction is weak. The cofactor is Mg(2+).

The protein localises to the virion. It carries out the reaction RNA(n) + a ribonucleoside 5'-triphosphate = RNA(n+1) + diphosphate. RNA-directed RNA polymerase that is involved in both transcription and genome replication. Together with VP3 capping enzyme, forms an enzyme complex positioned near the channels situated at each of the five-fold vertices of the core. Following infection, the outermost layer of the virus is lost, leaving a double-layered particle (DLP) made up of the core and VP6 shell. VP1 then catalyzes the transcription of fully conservative plus-strand genomic RNAs that are extruded through the DLP's channels into the cytoplasm where they function as mRNAs for translation of viral proteins. One copy of each of the viral (+)RNAs is also recruited during core assembly, together with newly synthesized polymerase complexes and VP2. The polymerase of these novo-formed particles catalyzes the synthesis of complementary minus-strands leading to dsRNA formation. To do so, the polymerase specifically recognizes and binds 4 bases 5'-UGUG-3' in the conserved 3'-sequence of plus-strand RNA templates. VP2 presumably activates the autoinhibited VP1-RNA complex to coordinate packaging and genome replication. Once dsRNA synthesis is complete, the polymerase switches to the transcriptional mode, thus providing secondary transcription. The sequence is that of RNA-directed RNA polymerase from Homo sapiens (Human).